The chain runs to 371 residues: Cyanide hydratase (371 aa).

In terms of domain architecture, CN hydrolase spans 6–285 (YKAAAVTSEP…DGLLYVDIDL (280 aa)). Residue glutamate 46 is the Proton acceptor of the active site. Lysine 128 is a catalytic residue. Catalysis depends on cysteine 163, which acts as the Nucleophile. The span at 339 to 353 (GLNRPLDPPKDERHG) shows a compositional bias: basic and acidic residues. Positions 339 to 371 (GLNRPLDPPKDERHGIVGVAGQKSAEQRKAGDL) are disordered.

Belongs to the carbon-nitrogen hydrolase superfamily. Nitrilase family. As to quaternary structure, oligomer of dimers, forming left-handed helical fibers.

The catalysed reaction is formamide = hydrogen cyanide + H2O. Functionally, catalyzes the hydration of cyanide to formamide. Degradation of cyanide may be important for plant pathogenic fungi in infection of cyanogenic plants. Also acts on 2-cyanopyridine, fumaronitrile and benzonitrile, albeit at a lower rate. The chain is Cyanide hydratase (nit) from Stereum hirsutum (strain FP-91666) (White-rot fungus).